The following is an 840-amino-acid chain: MSSNSGIQIPSRLPLLCTHDGVLLPGSTMRVSVDTARNMQLVKSRLLKGTSLKSTIIGVIPNTRDPEHDSDELPSLHSIGTAGLAVQVVGSNWPKPHYTLLITGLCRFRVSQLLRERPFPVAEVEQLDKLEQYTEGDPADGELGELSQRFYQAAVQLVGMLDMSVPVVAKLRRLLDSLPKETLPDVLAAMIRTSNKEKLQVLDAVDLEERFKKALPLLTRQIEGLKLLQKTRKLRPDDDKRVLSIRKGGVFPGRQFSLDEEVEDEDSDDTALLERKVKAAAMPEAALRVCLKELRRLKKMPQSMPEYALTRNYLEMMVELPWSKSTTDCLDIRAARVLLDNDHYAMEKLKKRVLEYLAVRQLKSTLKGPILCFVGPPGVGKTSVGRSIARTLGREFHRIALGGVCDQSDIRGHRRTYVGSMPGRIINGLKTVGVNNPVFLLDEVDKLGKSLQGDPAAALLEVLDPEQNHSFTDHYLNVPFDLSQVLFIATANTTATIPPALLDRMEVLQVPGYTQEEKVEIAHRHLIPHQLEQHGLTPQQLQIPQDTTLQIISKYTREAGVRSLERKIGAVCRAVAVKVAEGQKVSRSEAPTEQHAEQNTDSKVEDSGIAAPPEMPIVIDHVALKDILGPPLFEMEVSERLTLPGVAIGLAWTPMGGEIMFVEASRMEGEGQLTLTGQLGDVMKESAHLAISWLRSNAKTYLLNDGSADLLEGTDIHLHFPAGAVTKDGPSAGVTIVTCLASLLSGRLVRSDVAMTGEITLRGLVLPVGGIKDKVLAAHRANLKRIIIPKRNEKDLEEIPANVRADLDFVLAGTLDEVLNAAFDGGFPSAVNHPQVLSKL.

Residues Leu13–Ile222 form the Lon N-terminal domain. Gly375–Thr382 serves as a coordination point for ATP. The tract at residues Gln583–Asp606 is disordered. The segment covering Lys584–Asp606 has biased composition (basic and acidic residues). Residues Leu641–Gly825 form the Lon proteolytic domain. Residues Ser731 and Lys774 contribute to the active site. The Microbody targeting signal motif lies at Ser838–Leu840.

Belongs to the peptidase S16 family.

It localises to the peroxisome matrix. The catalysed reaction is Hydrolysis of proteins in presence of ATP.. ATP-dependent serine protease that mediates the selective degradation of misfolded and unassembled polypeptides in the peroxisomal matrix. Necessary for type 2 peroxisome targeting signal (PTS2)-containing protein processing and facilitates peroxisome matrix protein import. The sequence is that of Lon protease homolog 2, peroxisomal (lonp2) from Danio rerio (Zebrafish).